The primary structure comprises 128 residues: Small ribosomal subunit protein uS9 (128 aa).

Positions 107–128 (RAVERKKPGRPKARKRFQFSKR) are disordered. The segment covering 113-128 (KPGRPKARKRFQFSKR) has biased composition (basic residues).

This sequence belongs to the universal ribosomal protein uS9 family.

The sequence is that of Small ribosomal subunit protein uS9 from Parabacteroides distasonis (strain ATCC 8503 / DSM 20701 / CIP 104284 / JCM 5825 / NCTC 11152).